The sequence spans 257 residues: Thiazole synthase (257 aa).

Lys96 functions as the Schiff-base intermediate with DXP in the catalytic mechanism. 1-deoxy-D-xylulose 5-phosphate-binding positions include Gly157, 184–185 (AG), and 206–207 (NT).

The protein belongs to the ThiG family. Homotetramer. Forms heterodimers with either ThiH or ThiS.

It is found in the cytoplasm. The enzyme catalyses [ThiS sulfur-carrier protein]-C-terminal-Gly-aminoethanethioate + 2-iminoacetate + 1-deoxy-D-xylulose 5-phosphate = [ThiS sulfur-carrier protein]-C-terminal Gly-Gly + 2-[(2R,5Z)-2-carboxy-4-methylthiazol-5(2H)-ylidene]ethyl phosphate + 2 H2O + H(+). It functions in the pathway cofactor biosynthesis; thiamine diphosphate biosynthesis. Catalyzes the rearrangement of 1-deoxy-D-xylulose 5-phosphate (DXP) to produce the thiazole phosphate moiety of thiamine. Sulfur is provided by the thiocarboxylate moiety of the carrier protein ThiS. In vitro, sulfur can be provided by H(2)S. This Agrobacterium fabrum (strain C58 / ATCC 33970) (Agrobacterium tumefaciens (strain C58)) protein is Thiazole synthase.